We begin with the raw amino-acid sequence, 298 residues long: Bifunctional methyltransferase/endonuclease (298 aa).

The segment at 1–79 is probable methylated-DNA--protein-cysteine methyltransferase; it reads MQSIDLYSYL…SLGIDEKIRR (79 aa). The active site involves cysteine 56. Residues 80 to 298 form an endonuclease V region; that stretch reads LRNDGIEINN…TVALRRNNII (219 aa). The Mg(2+) site is built by aspartate 137 and aspartate 197.

In the N-terminal section; belongs to the MGMT family. The protein in the C-terminal section; belongs to the endonuclease V family. Mg(2+) is required as a cofactor.

It localises to the cytoplasm. It carries out the reaction Endonucleolytic cleavage at apurinic or apyrimidinic sites to products with a 5'-phosphate.. In terms of biological role, DNA repair enzyme involved in the repair of deaminated bases. Selectively cleaves double-stranded DNA at the second phosphodiester bond 3' to a deoxyinosine leaving behind the intact lesion on the nicked DNA. This chain is Bifunctional methyltransferase/endonuclease, found in Picrophilus torridus (strain ATCC 700027 / DSM 9790 / JCM 10055 / NBRC 100828 / KAW 2/3).